The following is an 812-amino-acid chain: Valine--tRNA ligase (812 aa).

The short motif at 46–56 (PTVSGQLHIGH) is the 'HIGH' region element. The 'KMSKS' region motif lies at 536 to 540 (KMSKS). Lys539 contributes to the ATP binding site.

The protein belongs to the class-I aminoacyl-tRNA synthetase family. ValS type 2 subfamily. As to quaternary structure, monomer.

The protein resides in the cytoplasm. The enzyme catalyses tRNA(Val) + L-valine + ATP = L-valyl-tRNA(Val) + AMP + diphosphate. Its function is as follows. Catalyzes the attachment of valine to tRNA(Val). As ValRS can inadvertently accommodate and process structurally similar amino acids such as threonine, to avoid such errors, it has a 'posttransfer' editing activity that hydrolyzes mischarged Thr-tRNA(Val) in a tRNA-dependent manner. This Rickettsia akari (strain Hartford) protein is Valine--tRNA ligase.